A 412-amino-acid chain; its full sequence is Major facilitator superfamily domain-containing protein 3 (412 aa).

The next 12 membrane-spanning stretches (helical) occupy residues 10 to 30, 40 to 60, 68 to 88, 99 to 119, 152 to 172, 173 to 193, 204 to 224, 252 to 272, 291 to 311, 320 to 340, 361 to 381, and 384 to 404; these read GLYLVQGLPYGLQSSLLPILL, VGLTKGLYAPWLLKLAWAPLV, VWLTLSTLSLGLVCGLLAVLP, TTVMGLLLLLNLGAAVQDVAL, GGLLVLFPTLSWPLLFLLLAA, TYWLAAALAWAAPALGRLPWP, YLLQDLLAVPGTLWTAGFVLT, LWSGLGAVTCSIAGSSLGGAL, LGSLACQTALLFHLNSPGASV, AVLLSLCLQQFFGGVVTTATF, FLATLELLGKLLLGTLAGVLA, and LGPHLCFAVFLVLSALPVLDL.

It belongs to the major facilitator superfamily. In brain, expressed in the cortex, striatum, hippocampus, hypothalamus, thalamus and cerebellum (at protein level). Widely expressed with highest levels in kidney and liver.

It is found in the membrane. The sequence is that of Major facilitator superfamily domain-containing protein 3 (Mfsd3) from Mus musculus (Mouse).